Reading from the N-terminus, the 379-residue chain is tRNA-specific 2-thiouridylase MnmA (379 aa).

ATP contacts are provided by residues 9–16 (AMSGGVDS) and Met-35. An interaction with target base in tRNA region spans residues 94–96 (NPD). The Nucleophile role is filled by Cys-99. Cys-99 and Cys-195 are joined by a disulfide. Gly-123 is a binding site for ATP. The segment at 145–147 (KDQ) is interaction with tRNA. Cys-195 (cysteine persulfide intermediate) is an active-site residue. The interval 307–308 (RY) is interaction with tRNA.

It belongs to the MnmA/TRMU family.

It is found in the cytoplasm. It carries out the reaction S-sulfanyl-L-cysteinyl-[protein] + uridine(34) in tRNA + AH2 + ATP = 2-thiouridine(34) in tRNA + L-cysteinyl-[protein] + A + AMP + diphosphate + H(+). In terms of biological role, catalyzes the 2-thiolation of uridine at the wobble position (U34) of tRNA, leading to the formation of s(2)U34. The polypeptide is tRNA-specific 2-thiouridylase MnmA (Xylella fastidiosa (strain M12)).